The chain runs to 348 residues: Phosphoribosylformylglycinamidine cyclo-ligase (348 aa).

It belongs to the AIR synthase family.

It is found in the cytoplasm. It carries out the reaction 2-formamido-N(1)-(5-O-phospho-beta-D-ribosyl)acetamidine + ATP = 5-amino-1-(5-phospho-beta-D-ribosyl)imidazole + ADP + phosphate + H(+). It participates in purine metabolism; IMP biosynthesis via de novo pathway; 5-amino-1-(5-phospho-D-ribosyl)imidazole from N(2)-formyl-N(1)-(5-phospho-D-ribosyl)glycinamide: step 2/2. The polypeptide is Phosphoribosylformylglycinamidine cyclo-ligase (Sorangium cellulosum (strain So ce56) (Polyangium cellulosum (strain So ce56))).